A 223-amino-acid chain; its full sequence is Ras-related protein RABA4c (223 aa).

22–29 (GDSAVGKS) is a binding site for GTP. The Effector region motif lies at 44-52 (SKATIGVEF). Residues 70 to 74 (DTAGQ), 128 to 131 (NKTD), and 158 to 159 (SA) contribute to the GTP site. S-geranylgeranyl cysteine attachment occurs at residues Cys-219 and Cys-220.

Belongs to the small GTPase superfamily. Rab family.

Its subcellular location is the cell membrane. In terms of biological role, intracellular vesicle trafficking and protein transport. In Arabidopsis thaliana (Mouse-ear cress), this protein is Ras-related protein RABA4c (RABA4C).